The primary structure comprises 977 residues: P3N-PIPO polyprotein (977 aa).

Positions 132-274 constitute a Peptidase S30 domain; the sequence is TCSSSGLDNL…QSITLRATHF (143 aa). Active-site for P1 proteinase activity residues include His-183, Asp-192, and Ser-225. The Involved in interaction with stylet and aphid transmission motif lies at 325-328; sequence KITC. Residues 583–585 carry the Involved in virions binding and aphid transmission motif; it reads PTK. The 123-residue stretch at 609–731 folds into the Peptidase C6 domain; that stretch reads MYIAKEGYCY…ESPMAQYKVG (123 aa). Active-site for helper component proteinase activity residues include Cys-617 and His-690.

It belongs to the potyviridae P3N-PIPO polyprotein family. As to quaternary structure, interacts (via PIPO domain) with host PCaP1 protein; this interaction may help to anchor the movement complex to the plasma membrane from which the complex could move to the plasmodesmata. Potyviral RNA is expressed as two polyproteins which undergo post-translational proteolytic processing. Genome polyprotein is processed by NIa-pro, P1 and HC-pro proteinases resulting in the production of at least ten individual proteins. P3N-PIPO is cleaved by P1 and HC-pro proteinases resulting in the production of three individual proteins. The P1 proteinase and the HC-pro cleave only their respective C-termini autocatalytically.

The protein resides in the host cell junction. The protein localises to the host plasmodesma. It catalyses the reaction Hydrolyzes a Gly-|-Gly bond at its own C-terminus, commonly in the sequence -Tyr-Xaa-Val-Gly-|-Gly, in the processing of the potyviral polyprotein.. In terms of biological role, required for aphid transmission and also has proteolytic activity. Only cleaves a Gly-Gly dipeptide at its own C-terminus. Interacts with virions and aphid stylets. Acts as a suppressor of RNA-mediated gene silencing, also known as post-transcriptional gene silencing (PTGS), a mechanism of plant viral defense that limits the accumulation of viral RNAs. May have RNA-binding activity. Functionally, allows efficient cell to cell propagation, by bypassing the host cell wall barrier. Transports viral genome to neighboring plant cells directly through plasmosdesmata, without any budding. This Nicotiana tabacum (Common tobacco) protein is P3N-PIPO polyprotein.